The following is a 269-amino-acid chain: uncharacterized protein (269 aa).

This is an uncharacterized protein from Acanthamoeba polyphaga mimivirus (APMV).